A 700-amino-acid chain; its full sequence is Elongation factor G (700 aa).

Residues 8-290 (ERYRNIGISA…AVVEYLPAPT (283 aa)) enclose the tr-type G domain. Residues 17–24 (AHIDAGKT), 88–92 (DTPGH), and 142–145 (NKMD) each bind GTP.

Belongs to the TRAFAC class translation factor GTPase superfamily. Classic translation factor GTPase family. EF-G/EF-2 subfamily.

It localises to the cytoplasm. Catalyzes the GTP-dependent ribosomal translocation step during translation elongation. During this step, the ribosome changes from the pre-translocational (PRE) to the post-translocational (POST) state as the newly formed A-site-bound peptidyl-tRNA and P-site-bound deacylated tRNA move to the P and E sites, respectively. Catalyzes the coordinated movement of the two tRNA molecules, the mRNA and conformational changes in the ribosome. This chain is Elongation factor G, found in Haemophilus influenzae (strain PittEE).